Consider the following 170-residue polypeptide: 4-hydroxyphenylacetate 3-monooxygenase reductase component (170 aa).

This sequence belongs to the non-flavoprotein flavin reductase family. HpaC subfamily. In terms of assembly, homodimer. 4-HPA 3-monooxygenase consists of a reductase component HpaC and an oxygenase component HpaB.

It carries out the reaction a reduced flavin + NAD(+) = an oxidized flavin + NADH + 2 H(+). The protein operates within aromatic compound metabolism; 4-hydroxyphenylacetate degradation; pyruvate and succinate semialdehyde from 4-hydroxyphenylacetate: step 1/7. In terms of biological role, catalyzes the reduction of free flavins (FMN, FAD and riboflavin) by NADH. Subsequently, the reduced flavins diffuse to the large HpaB component or to other electron acceptors such as cytochrome c and Fe(3+) ion. The protein is 4-hydroxyphenylacetate 3-monooxygenase reductase component (hpaC) of Escherichia coli.